The chain runs to 461 residues: Photosystem II CP43 reaction center protein (461 aa).

Residues 1 to 2 (ME) constitute a propeptide that is removed on maturation. Position 3 is an N-acetylthreonine (threonine 3). Threonine 3 is subject to Phosphothreonine. 5 consecutive transmembrane segments (helical) span residues 57-81 (LFEVSHFVPEKPMYEQGLILLPHIA), 122-143 (LIGPETLEESYPFFGYVWKDKN), 166-188 (KAMYFGGVYDTWAPGGGDVRVIT), 243-263 (TPWPWARRAFVWSGEAYLSYS), and 279-300 (WFNNTAYPSEFYGPTGPEASQS). Residue glutamate 355 participates in [CaMn4O5] cluster binding. The helical transmembrane segment at 435–459 (RARAAAAGFEKGIDRFDEPVLSMRP) threads the bilayer.

This sequence belongs to the PsbB/PsbC family. PsbC subfamily. As to quaternary structure, PSII is composed of 1 copy each of membrane proteins PsbA, PsbB, PsbC, PsbD, PsbE, PsbF, PsbH, PsbI, PsbJ, PsbK, PsbL, PsbM, PsbT, PsbX, PsbY, PsbZ, Psb30/Ycf12, at least 3 peripheral proteins of the oxygen-evolving complex and a large number of cofactors. It forms dimeric complexes. The cofactor is Binds multiple chlorophylls and provides some of the ligands for the Ca-4Mn-5O cluster of the oxygen-evolving complex. It may also provide a ligand for a Cl- that is required for oxygen evolution. PSII binds additional chlorophylls, carotenoids and specific lipids.. In terms of processing, phosphorylated in vitro.

Its subcellular location is the plastid. It localises to the chloroplast thylakoid membrane. One of the components of the core complex of photosystem II (PSII). It binds chlorophyll and helps catalyze the primary light-induced photochemical processes of PSII. PSII is a light-driven water:plastoquinone oxidoreductase, using light energy to abstract electrons from H(2)O, generating O(2) and a proton gradient subsequently used for ATP formation. The sequence is that of Photosystem II CP43 reaction center protein from Chlamydomonas reinhardtii (Chlamydomonas smithii).